The sequence spans 77 residues: Large ribosomal subunit protein bL28 (77 aa).

It belongs to the bacterial ribosomal protein bL28 family.

The sequence is that of Large ribosomal subunit protein bL28 from Ralstonia nicotianae (strain ATCC BAA-1114 / GMI1000) (Ralstonia solanacearum).